Reading from the N-terminus, the 212-residue chain is Ribonuclease HII (212 aa).

Positions 19 to 212 constitute an RNase H type-2 domain; sequence CIIVGVDEVG…SKISYMFKNS (194 aa). The a divalent metal cation site is built by aspartate 25, glutamate 26, and aspartate 120.

The protein belongs to the RNase HII family. Mn(2+) is required as a cofactor. Requires Mg(2+) as cofactor.

It is found in the cytoplasm. The catalysed reaction is Endonucleolytic cleavage to 5'-phosphomonoester.. Functionally, endonuclease that specifically degrades the RNA of RNA-DNA hybrids. The polypeptide is Ribonuclease HII (Ehrlichia ruminantium (strain Welgevonden)).